Consider the following 122-residue polypeptide: Large ribosomal subunit protein uL14c (122 aa).

The protein belongs to the universal ribosomal protein uL14 family. As to quaternary structure, part of the 50S ribosomal subunit.

Its subcellular location is the plastid. The protein resides in the chloroplast. Its function is as follows. Binds to 23S rRNA. This chain is Large ribosomal subunit protein uL14c, found in Illicium oligandrum (Star anise).